Here is a 300-residue protein sequence, read N- to C-terminus: Lysophosphatidic acid:oleoyl-CoA acyltransferase 1 (300 aa).

The chain crosses the membrane as a helical span at residues 33–53; the sequence is LLGILGVKTIIMLPLIMLYLL. An HXXXXD motif motif is present at residues 101 to 106; that stretch reads CTSPLD.

The protein belongs to the 1-acyl-sn-glycerol-3-phosphate acyltransferase family.

It localises to the lipid droplet. It is found in the endoplasmic reticulum membrane. It catalyses the reaction a 1-acyl-sn-glycero-3-phosphate + an acyl-CoA = a 1,2-diacyl-sn-glycero-3-phosphate + CoA. It carries out the reaction 1-hexadecanoyl-sn-glycero-3-phosphate + (9Z)-octadecenoyl-CoA = 1-hexadecanoyl-2-(9Z-octadecenoyl)-sn-glycero-3-phosphate + CoA. Acyl-CoA-dependent lysophosphatidic acid acyltransferase with preference for oleoyl-CoA. Involved in triacylglyceride homeostasis and lipid droplet formation. Involved in vacuolar protein sorting. In Saccharomyces cerevisiae (strain ATCC 204508 / S288c) (Baker's yeast), this protein is Lysophosphatidic acid:oleoyl-CoA acyltransferase 1.